The sequence spans 436 residues: 3-ketoacyl-CoA thiolase (436 aa).

The active-site Acyl-thioester intermediate is the Cys99. Catalysis depends on proton acceptor residues His392 and Cys422.

The protein belongs to the thiolase-like superfamily. Thiolase family. As to quaternary structure, heterotetramer of two alpha chains (FadJ) and two beta chains (FadI).

It is found in the cytoplasm. It catalyses the reaction an acyl-CoA + acetyl-CoA = a 3-oxoacyl-CoA + CoA. The protein operates within lipid metabolism; fatty acid beta-oxidation. Its function is as follows. Catalyzes the final step of fatty acid oxidation in which acetyl-CoA is released and the CoA ester of a fatty acid two carbons shorter is formed. The protein is 3-ketoacyl-CoA thiolase of Shewanella frigidimarina (strain NCIMB 400).